The sequence spans 511 residues: Inactive cytochrome P450 monooxygenase cloA (511 aa).

The chain crosses the membrane as a helical span at residues 17 to 37; it reads ILLTAGLCVPCALVIHGIYNL. 2 N-linked (GlcNAc...) asparagine glycosylation sites follow: N81 and N344. C450 serves as a coordination point for heme.

Belongs to the cytochrome P450 family. Heme serves as cofactor.

The protein resides in the membrane. In terms of biological role, inactive cytochrome P450 monooxygenase; part of the gene cluster that mediates the biosynthesis of fungal ergot alkaloid. DmaW catalyzes the first step of ergot alkaloid biosynthesis by condensing dimethylallyl diphosphate (DMAP) and tryptophan to form 4-dimethylallyl-L-tryptophan. The second step is catalyzed by the methyltransferase easF that methylates 4-dimethylallyl-L-tryptophan in the presence of S-adenosyl-L-methionine, resulting in the formation of 4-dimethylallyl-L-abrine. The catalase easC and the FAD-dependent oxidoreductase easE then transform 4-dimethylallyl-L-abrine to chanoclavine-I which is further oxidized by easD in the presence of NAD(+), resulting in the formation of chanoclavine-I aldehyde. Agroclavine dehydrogenase easG then mediates the conversion of chanoclavine-I aldehyde to agroclavine via a non-enzymatic adduct reaction: the substrate is an iminium intermediate that is formed spontaneously from chanoclavine-I aldehyde in the presence of glutathione. Further conversion of agroclavine to paspalic acid is a two-step process involving oxidation of agroclavine to elymoclavine and of elymoclavine to paspalic acid, the second step being performed by the elymoclavine oxidase cloA. However, cloA does not encode a functional enzyme indicating that C.fusiformis terminates its ergot alkaloid pathway at elymoclavine. The sequence is that of Inactive cytochrome P450 monooxygenase cloA from Claviceps fusiformis (Ergot fungus).